Consider the following 906-residue polypeptide: ATP-dependent DNA helicase DDX11 (906 aa).

In terms of domain architecture, Helicase ATP-binding spans 9 to 442 (GGIHFPFPFP…KNLMYIKQIL (434 aa)). Residue 44–51 (SPTGTGKS) participates in ATP binding. The disordered stretch occupies residues 78–111 (APGSGPPSSEKNSLLTSSSCQEPTDTPRPAGEPD). Residues 85–96 (SSEKNSLLTSSS) are compositionally biased toward low complexity. A Phosphoserine modification is found at serine 260. Cysteine 265 and cysteine 283 together coordinate [4Fe-4S] cluster. A compositionally biased stretch (basic and acidic residues) spans 284-301 (VDMQRSKREKNGTGEDKP). Positions 284–310 (VDMQRSKREKNGTGEDKPKRKRQKIQT) are disordered. Positions 312 and 347 each coordinate [4Fe-4S] cluster. Positions 390 to 393 (DEAH) match the DEAH box motif.

It belongs to the DEAD box helicase family. DEAH subfamily. DDX11/CHL1 sub-subfamily. In terms of assembly, associates with the CTF18-RFC complex. Associates with a cohesin complex composed of RAD21, SMC1 proteins and SMC3. Interacts with CHTF18. Interacts with DSCC1. Interacts with FEN1; this interaction is direct and increases flap endonuclease activity of FEN1. Interacts with PCNA. Interacts with POLR1A and UBTF. Interacts with RAD21, SMC1 proteins and SMC3. Interacts with RFC2. Interacts with TIMELESS; this interaction increases recruitment of both proteins onto chromatin in response to replication stress induction by hydroxyurea. The cofactor is [4Fe-4S] cluster.

It localises to the nucleus. Its subcellular location is the nucleolus. It is found in the cytoplasm. The protein resides in the cytoskeleton. The protein localises to the spindle pole. It localises to the midbody. Its subcellular location is the microtubule organizing center. It is found in the centrosome. It catalyses the reaction Couples ATP hydrolysis with the unwinding of duplex DNA at the replication fork by translocating in the 5'-3' direction. This creates two antiparallel DNA single strands (ssDNA). The leading ssDNA polymer is the template for DNA polymerase III holoenzyme which synthesizes a continuous strand.. The catalysed reaction is ATP + H2O = ADP + phosphate + H(+). Functionally, DNA-dependent ATPase and ATP-dependent DNA helicase that participates in various functions in genomic stability, including DNA replication, DNA repair and heterochromatin organization as well as in ribosomal RNA synthesis. Its double-stranded DNA helicase activity requires either a minimal 5'-single-stranded tail length of approximately 15 nt (flap substrates) or 10 nt length single-stranded gapped DNA substrates of a partial duplex DNA structure for helicase loading and translocation along DNA in a 5' to 3' direction. The helicase activity is capable of displacing duplex regions up to 100 bp, which can be extended up to 500 bp by the replication protein A (RPA) or the cohesion CTF18-replication factor C (Ctf18-RFC) complex activities. Also shows ATPase- and helicase activities on substrates that mimic key DNA intermediates of replication, repair and homologous recombination reactions, including forked duplex, anti-parallel G-quadruplex and three-stranded D-loop DNA molecules. Plays a role in DNA double-strand break (DSB) repair at the DNA replication fork during DNA replication recovery from DNA damage. Recruited with TIMELESS factor upon DNA-replication stress response at DNA replication fork to preserve replication fork progression, and hence ensure DNA replication fidelity. Also cooperates with TIMELESS factor during DNA replication to regulate proper sister chromatid cohesion and mitotic chromosome segregation. Stimulates 5'-single-stranded DNA flap endonuclease activity of FEN1 in an ATP- and helicase-independent manner; and hence it may contribute in Okazaki fragment processing at DNA replication fork during lagging strand DNA synthesis. Its ability to function at DNA replication fork is modulated by its binding to long non-coding RNA (lncRNA) cohesion regulator non-coding RNA DDX11-AS1/CONCR, which is able to increase both DDX11 ATPase activity and binding to DNA replicating regions. Also plays a role in heterochromatin organization. Involved in rRNA transcription activation through binding to active hypomethylated rDNA gene loci by recruiting UBTF and the RNA polymerase Pol I transcriptional machinery. Plays a role in embryonic development and prevention of aneuploidy. Involved in melanoma cell proliferation and survival. Associates with chromatin at DNA replication fork regions. Binds to single- and double-stranded DNAs. This Mus musculus (Mouse) protein is ATP-dependent DNA helicase DDX11.